The primary structure comprises 178 residues: Cytidylate kinase (178 aa).

An ATP-binding site is contributed by 7–15 (GLPGTGTTT).

The protein belongs to the cytidylate kinase family. Type 2 subfamily.

It is found in the cytoplasm. The catalysed reaction is CMP + ATP = CDP + ADP. It catalyses the reaction dCMP + ATP = dCDP + ADP. This chain is Cytidylate kinase, found in Methanococcus aeolicus (strain ATCC BAA-1280 / DSM 17508 / OCM 812 / Nankai-3).